The sequence spans 810 residues: AMP deaminase (810 aa).

The span at 1–10 (MDNQATQRLN) shows a compositional bias: polar residues. 2 disordered regions span residues 1–61 (MDNQ…SHES) and 114–137 (AAMN…PRTL). Phosphoserine occurs at positions 19, 58, and 61. A compositionally biased stretch (polar residues) spans 125-137 (HASQNSGGKPRTL). Position 138 is a phosphoserine (Ser-138). 2 residues coordinate Zn(2+): His-362 and His-364. Substrate is bound by residues His-364 and 433–438 (KFNLKY). His-630 is a binding site for Zn(2+). Glu-633 is a binding site for substrate. The active-site Proton acceptor is His-652. Zn(2+) is bound at residue Asp-707. Residue 708-711 (DPLQ) coordinates substrate.

It belongs to the metallo-dependent hydrolases superfamily. Adenosine and AMP deaminases family. In terms of assembly, homotetramer. Zn(2+) is required as a cofactor.

The catalysed reaction is AMP + H2O + H(+) = IMP + NH4(+). It functions in the pathway purine metabolism; IMP biosynthesis via salvage pathway; IMP from AMP: step 1/1. In terms of biological role, AMP deaminase plays a critical role in energy metabolism. This is AMP deaminase (AMD1) from Saccharomyces cerevisiae (strain ATCC 204508 / S288c) (Baker's yeast).